Reading from the N-terminus, the 476-residue chain is Bifunctional protein HldE (476 aa).

The tract at residues 1 to 318 (MAQYSAEFKQ…ENAIHARPET (318 aa)) is ribokinase. Residue 195-198 (NMSE) participates in ATP binding. The active site involves Asp-264. Residues 344–476 (MTNGCFDILH…VIEKIKLLKD (133 aa)) form a cytidylyltransferase region.

It in the N-terminal section; belongs to the carbohydrate kinase PfkB family. In the C-terminal section; belongs to the cytidylyltransferase family. In terms of assembly, homodimer.

It carries out the reaction D-glycero-beta-D-manno-heptose 7-phosphate + ATP = D-glycero-beta-D-manno-heptose 1,7-bisphosphate + ADP + H(+). The catalysed reaction is D-glycero-beta-D-manno-heptose 1-phosphate + ATP + H(+) = ADP-D-glycero-beta-D-manno-heptose + diphosphate. The protein operates within nucleotide-sugar biosynthesis; ADP-L-glycero-beta-D-manno-heptose biosynthesis; ADP-L-glycero-beta-D-manno-heptose from D-glycero-beta-D-manno-heptose 7-phosphate: step 1/4. It functions in the pathway nucleotide-sugar biosynthesis; ADP-L-glycero-beta-D-manno-heptose biosynthesis; ADP-L-glycero-beta-D-manno-heptose from D-glycero-beta-D-manno-heptose 7-phosphate: step 3/4. In terms of biological role, catalyzes the phosphorylation of D-glycero-D-manno-heptose 7-phosphate at the C-1 position to selectively form D-glycero-beta-D-manno-heptose-1,7-bisphosphate. Functionally, catalyzes the ADP transfer from ATP to D-glycero-beta-D-manno-heptose 1-phosphate, yielding ADP-D-glycero-beta-D-manno-heptose. In Haemophilus influenzae (strain PittGG), this protein is Bifunctional protein HldE.